A 347-amino-acid polypeptide reads, in one-letter code: Ubiquitin thioesterase Otu1 (347 aa).

In terms of domain architecture, Ubiquitin-like spans 5–87 (FSVKLKSKKG…LIVEEKAAPA (83 aa)). The tract at residues 8–89 (KLKSKKGQFI…VEEKAAPAPA (82 aa)) is UBX-like. Residues 150-274 (LLKKVVPADN…GIHYDPLYME (125 aa)) enclose the OTU domain. The interval 155 to 161 (VPADNSC) is cys-loop. Residue D158 is part of the active site. Catalysis depends on C161, which acts as the Nucleophile. A variable-loop region spans residues 213-223 (IQKADSWGGAI). Positions 263–267 (FDGIH) are his-loop. Substrate is bound at residue I266. Residue H267 is part of the active site. The interval 290–295 (LGVYQQ) is S2 site. The segment at 317–341 (LRCMQCDVRLVGQVQAQEHAKQTGH) adopts a C2H2-type zinc-finger fold. H341 is an active-site residue.

The catalysed reaction is Thiol-dependent hydrolysis of ester, thioester, amide, peptide and isopeptide bonds formed by the C-terminal Gly of ubiquitin (a 76-residue protein attached to proteins as an intracellular targeting signal).. Its function is as follows. Hydrolase that can remove conjugated ubiquitin from proteins and may therefore play an important regulatory role at the level of protein turnover by preventing degradation. Involved in the regulation of DNA damage repair. The chain is Ubiquitin thioesterase Otu1 from Drosophila melanogaster (Fruit fly).